A 484-amino-acid chain; its full sequence is Aspartyl/glutamyl-tRNA(Asn/Gln) amidotransferase subunit B (484 aa).

This sequence belongs to the GatB/GatE family. GatB subfamily. In terms of assembly, heterotrimer of A, B and C subunits.

It carries out the reaction L-glutamyl-tRNA(Gln) + L-glutamine + ATP + H2O = L-glutaminyl-tRNA(Gln) + L-glutamate + ADP + phosphate + H(+). The enzyme catalyses L-aspartyl-tRNA(Asn) + L-glutamine + ATP + H2O = L-asparaginyl-tRNA(Asn) + L-glutamate + ADP + phosphate + 2 H(+). In terms of biological role, allows the formation of correctly charged Asn-tRNA(Asn) or Gln-tRNA(Gln) through the transamidation of misacylated Asp-tRNA(Asn) or Glu-tRNA(Gln) in organisms which lack either or both of asparaginyl-tRNA or glutaminyl-tRNA synthetases. The reaction takes place in the presence of glutamine and ATP through an activated phospho-Asp-tRNA(Asn) or phospho-Glu-tRNA(Gln). This Anaeromyxobacter dehalogenans (strain 2CP-C) protein is Aspartyl/glutamyl-tRNA(Asn/Gln) amidotransferase subunit B.